A 136-amino-acid chain; its full sequence is Large ribosomal subunit protein uL16c (136 aa).

It belongs to the universal ribosomal protein uL16 family. As to quaternary structure, part of the 50S ribosomal subunit.

The protein localises to the plastid. It is found in the chloroplast. This is Large ribosomal subunit protein uL16c from Mesostigma viride (Green alga).